A 915-amino-acid polypeptide reads, in one-letter code: DNA (cytosine-5)-methyltransferase 3 (915 aa).

Over residues 1 to 14 the composition is skewed to low complexity; the sequence is MAPSSPSSARPTRA. Disordered regions lie at residues 1-107 and 152-171; these read MAPS…AEEQ and HSNWPKRYERSTAANKPEED. Over residues 21-30 the composition is skewed to basic and acidic residues; the sequence is AMAEEIHQNQ. Residues 42–57 show a composition bias toward basic residues; that stretch reads AKRRRKAASSGKKPKP. Residues 71–80 are compositionally biased toward basic and acidic residues; the sequence is KKGETEKTEP. A compositionally biased stretch (acidic residues) spans 81-107; that stretch reads VVDDVCAEEPDEEELAMGEEEAEAEEQ. Positions 188 to 313 constitute a BAH domain; sequence IVYCLGDDVY…VAYSTFANIS (126 aa). Over residues 315–328 the composition is skewed to polar residues; that stretch reads ENGQSGSETASGIS. Residues 315-338 form a disordered region; sequence ENGQSGSETASGISSDDAGLETSS. In terms of domain architecture, SAM-dependent MTase C5-type spans 345-876; it reads ATLLDLYSGC…YCLGQAYLGE (532 aa). Residues 445-508 enclose the Chromo domain; it reads FVVQKLIGIR…EGRKRKILPL (64 aa). The active site involves Cys-521.

The protein belongs to the class I-like SAM-binding methyltransferase superfamily. C5-methyltransferase family.

The protein resides in the nucleus. The catalysed reaction is a 2'-deoxycytidine in DNA + S-adenosyl-L-methionine = a 5-methyl-2'-deoxycytidine in DNA + S-adenosyl-L-homocysteine + H(+). Functionally, may be involved in the CpXpG methylation and in gene silencing. The chain is DNA (cytosine-5)-methyltransferase 3 (DMT105) from Zea mays (Maize).